A 361-amino-acid polypeptide reads, in one-letter code: Phosphate acyltransferase (361 aa).

The disordered stretch occupies residues 342-361; it reads ADGAAAEQGPTPRRTAPRQT.

It belongs to the PlsX family. As to quaternary structure, homodimer. Probably interacts with PlsY.

Its subcellular location is the cytoplasm. The enzyme catalyses a fatty acyl-[ACP] + phosphate = an acyl phosphate + holo-[ACP]. It functions in the pathway lipid metabolism; phospholipid metabolism. Functionally, catalyzes the reversible formation of acyl-phosphate (acyl-PO(4)) from acyl-[acyl-carrier-protein] (acyl-ACP). This enzyme utilizes acyl-ACP as fatty acyl donor, but not acyl-CoA. The sequence is that of Phosphate acyltransferase from Anaeromyxobacter sp. (strain K).